Here is a 229-residue protein sequence, read N- to C-terminus: MNQLEQKLEQDFGIVFSQKDLLETAFTHTSYANEHRLLNISHNERLEFLGDAALQLVISVYLYNRYPNKPEGEMSKMRSTIVREESLAGFTKACGFEQYIRLGKGEEKSGGRERATILGDLWEAFLGALYLDQGLPAVEKFLNQVMIPQVEKGNFDRVIDYKTALQERLQVNGKVDITYTVIDESGPAHAKEFTMQVAVDGKELSTGFGKSKKLAEQAAAKSALEQLGN.

The RNase III domain occupies 5-134; sequence EQKLEQDFGI…FLGALYLDQG (130 aa). Glu-47 is a Mg(2+) binding site. Asp-51 is an active-site residue. Mg(2+) contacts are provided by Asp-120 and Glu-123. Residue Glu-123 is part of the active site. Residues 160 to 229 form the DRBM domain; sequence DYKTALQERL…AKSALEQLGN (70 aa).

The protein belongs to the ribonuclease III family. In terms of assembly, homodimer. Mg(2+) serves as cofactor.

The protein resides in the cytoplasm. It carries out the reaction Endonucleolytic cleavage to 5'-phosphomonoester.. Its function is as follows. Digests double-stranded RNA. Involved in the processing of primary rRNA transcript to yield the immediate precursors to the large and small rRNAs (23S and 16S). Also processes some mRNAs, and tRNAs when they are encoded in the rRNA operon. CRISPR (clustered regularly interspaced short palindromic repeat) is an adaptive immune system that provides protection against mobile genetic elements (viruses, transposable elements and conjugative plasmids). CRISPR clusters contain spacers, sequences complementary to antecedent mobile elements, and target invading nucleic acids. CRISPR clusters are transcribed and processed into CRISPR RNA (crRNA). In this organism endogenous ribonuclease 3 and Cas9 are required for correct coprocessing of pre-crRNA and the trans-encoded small RNA (tracrRNA). Cas9, crRNA and tracrRNA are required for cleavage of invading DNA. Complements pre-crRNA and tracRNA coprocessing defects in an rnc deletion in S.pyogenes strain 370. The protein is Ribonuclease 3 of Streptococcus thermophilus (strain ATCC BAA-491 / LMD-9).